The chain runs to 260 residues: Zinc import ATP-binding protein ZnuC (260 aa).

An ABC transporter domain is found at 14-229; sequence LTARNLCADR…PEFARLFGDQ (216 aa). 46–53 is a binding site for ATP; that stretch reads GPNGAGKS.

This sequence belongs to the ABC transporter superfamily. Zinc importer (TC 3.A.1.15.5) family. As to quaternary structure, the complex is composed of two ATP-binding proteins (ZnuC), two transmembrane proteins (ZnuB) and a solute-binding protein (ZnuA).

The protein localises to the cell inner membrane. The enzyme catalyses Zn(2+)(out) + ATP(in) + H2O(in) = Zn(2+)(in) + ADP(in) + phosphate(in) + H(+)(in). Part of the ABC transporter complex ZnuABC involved in zinc import. Responsible for energy coupling to the transport system. The polypeptide is Zinc import ATP-binding protein ZnuC (Magnetococcus marinus (strain ATCC BAA-1437 / JCM 17883 / MC-1)).